A 416-amino-acid polypeptide reads, in one-letter code: Inositol polyphosphate multikinase (416 aa).

Residues M1–G38 are disordered. Position 2 is an N-acetylalanine (A2). Residue S7 is modified to Phosphoserine. K75 provides a ligand contact to ATP. Substrate is bound at residue R82. ATP-binding positions include E131–V133 and D144. Residues K146, K160–K167, and Q196 each bind substrate. A Nuclear localization signal motif is present at residues R320 to H330. D385 is an ATP binding site. H388 is a binding site for substrate.

It belongs to the inositol phosphokinase (IPK) family. Mg(2+) serves as cofactor. As to expression, ubiquitous, with the highest expression in skeletal muscle, liver, placenta, lung, peripheral blood leukocytes, kidney, spleen and colon.

The protein resides in the nucleus. It carries out the reaction 1D-myo-inositol 1,4,5-trisphosphate + 2 ATP = 1D-myo-inositol 1,3,4,5,6-pentakisphosphate + 2 ADP + 2 H(+). It catalyses the reaction 1D-myo-inositol 1,3,4,6-tetrakisphosphate + ATP = 1D-myo-inositol 1,3,4,5,6-pentakisphosphate + ADP + H(+). The catalysed reaction is 1-octadecanoyl-2-(5Z,8Z,11Z,14Z)-eicosatetraenoyl-sn-glycero-3-phospho-1D-myo-inositol 4,5-bisphosphate + ATP = 1-octadecanoyl-2-(5Z,8Z,11Z,14Z-eicosatetraenoyl)-sn-glycero-3-phospho-(1D-myo-inositol 3,4,5-triphosphate) + ADP + H(+). The enzyme catalyses a 1,2-diacyl-sn-glycero-3-phospho-(1D-myo-inositol-4,5-bisphosphate) + ATP = a 1,2-diacyl-sn-glycero-3-phospho-(1D-myo-inositol-3,4,5-trisphosphate) + ADP + H(+). It carries out the reaction 1D-myo-inositol 1,4,5,6-tetrakisphosphate + ATP = 1D-myo-inositol 1,3,4,5,6-pentakisphosphate + ADP + H(+). Its pathway is phospholipid metabolism; phosphatidylinositol metabolism. Its activity is regulated as follows. Inhibited by flavonoids that occupy the ATP-binding pocket. Inhibited by myricetin, quercetin, luteolin, kaempferol, isorhamnetin and diosmetin, and to a lesser degree by rhamnetin and apigenin. Its function is as follows. Inositol phosphate kinase with a broad substrate specificity. Phosphorylates inositol 1,4,5-trisphosphate (Ins(1,4,5)P3) first to inositol 1,3,4,5-tetrakisphosphate and then to inositol 1,3,4,5,6-pentakisphosphate (Ins(1,3,4,5,6)P5). Phosphorylates inositol 1,3,4,6-tetrakisphosphate (Ins(1,3,4,6)P4). Phosphorylates inositol 1,4,5,6-tetrakisphosphate (Ins(1,4,5,6)P4). Phosphorylates glycero-3-phospho-1D-myo-inositol 4,5-bisphosphate to glycero-3-phospho-1D-myo-inositol 3,4,5-trisphosphate. Plays an important role in MLKL-mediated necroptosis via its role in the biosynthesis of inositol pentakisphosphate (InsP5) and inositol hexakisphosphate (InsP6). Binding of these highly phosphorylated inositol phosphates to MLKL mediates the release of an N-terminal auto-inhibitory region, leading to activation of the kinase. Essential for activated phospho-MLKL to oligomerize and localize to the cell membrane during necroptosis. Required for normal embryonic development, probably via its role in the biosynthesis of inositol 1,3,4,5,6-pentakisphosphate (Ins(1,3,4,5,6)P5) and inositol hexakisphosphate (InsP6). This chain is Inositol polyphosphate multikinase (IPMK), found in Homo sapiens (Human).